Here is a 1216-residue protein sequence, read N- to C-terminus: ATP-dependent helicase/nuclease subunit A (1216 aa).

Positions 26–488 (QKKTAEQIEA…IILKENFRSS (463 aa)) constitute a UvrD-like helicase ATP-binding domain. 47–54 (ASAGSGKT) lines the ATP pocket. In terms of domain architecture, UvrD-like helicase C-terminal spans 515–802 (KHQLVFANTK…ELMTIHKSKG (288 aa)).

It belongs to the helicase family. AddA subfamily. Heterodimer of AddA and AddB/RexB. It depends on Mg(2+) as a cofactor.

It catalyses the reaction Couples ATP hydrolysis with the unwinding of duplex DNA by translocating in the 3'-5' direction.. The catalysed reaction is ATP + H2O = ADP + phosphate + H(+). Functionally, the heterodimer acts as both an ATP-dependent DNA helicase and an ATP-dependent, dual-direction single-stranded exonuclease. Recognizes the chi site generating a DNA molecule suitable for the initiation of homologous recombination. The AddA nuclease domain is required for chi fragment generation; this subunit has the helicase and 3' -&gt; 5' nuclease activities. The sequence is that of ATP-dependent helicase/nuclease subunit A from Streptococcus pneumoniae serotype 2 (strain D39 / NCTC 7466).